We begin with the raw amino-acid sequence, 316 residues long: MQEFSLWCDFIERDFLENDFLKLINKGAICGATSNPSLFCEAITKSAFYQDEIAKLKGKKAKEIYETLALKDILQASSALMPLYEKNPNNGYISLEIDPFLEDDAIKSIDEAKRLFKTLNRPNVMIKVPASTSGFEVISALAQASIPINVTLVFSPKIAGEIAQILAKEAQKRAVISVFVSRFDKEIDPLVPKNLQAQSGIINATECYYQISQHANKLISTLFASTGVKSNSLAKDYYIKALCFKNSINTAPLEALNAYLLDPNTEYQTPLKIAEIEAFKKELKTHNIDLENTAQKLLKEGLIAFKQSFEKLLKSF.

Lys-127 acts as the Schiff-base intermediate with substrate in catalysis.

The protein belongs to the transaldolase family. Type 2 subfamily.

Its subcellular location is the cytoplasm. It carries out the reaction D-sedoheptulose 7-phosphate + D-glyceraldehyde 3-phosphate = D-erythrose 4-phosphate + beta-D-fructose 6-phosphate. The protein operates within carbohydrate degradation; pentose phosphate pathway; D-glyceraldehyde 3-phosphate and beta-D-fructose 6-phosphate from D-ribose 5-phosphate and D-xylulose 5-phosphate (non-oxidative stage): step 2/3. Transaldolase is important for the balance of metabolites in the pentose-phosphate pathway. The chain is Transaldolase from Helicobacter pylori (strain P12).